Consider the following 29-residue polypeptide: Photosystem I reaction center subunit XII (29 aa).

A helical transmembrane segment spans residues 7–24 (FVALLLALVPAVLAYRLG).

It belongs to the PsaM family.

The protein localises to the cellular thylakoid membrane. This chain is Photosystem I reaction center subunit XII, found in Synechococcus sp. (strain ATCC 27144 / PCC 6301 / SAUG 1402/1) (Anacystis nidulans).